We begin with the raw amino-acid sequence, 457 residues long: Argininosuccinate lyase (457 aa).

It belongs to the lyase 1 family. Argininosuccinate lyase subfamily.

It is found in the cytoplasm. The catalysed reaction is 2-(N(omega)-L-arginino)succinate = fumarate + L-arginine. The protein operates within amino-acid biosynthesis; L-arginine biosynthesis; L-arginine from L-ornithine and carbamoyl phosphate: step 3/3. The sequence is that of Argininosuccinate lyase from Escherichia coli O139:H28 (strain E24377A / ETEC).